Here is a 178-residue protein sequence, read N- to C-terminus: Ribulose bisphosphate carboxylase small subunit, chloroplastic (178 aa).

A chloroplast-targeting transit peptide spans 1 to 55; that stretch reads MASSMMVSTAAVSRTSPAQSNMVVPFAGLHSSAAFPVTRKFADSSKLPSNGLRVR.

The protein belongs to the RuBisCO small chain family. Heterohexadecamer of 8 large and 8 small subunits.

It is found in the plastid. Its subcellular location is the chloroplast. In terms of biological role, ruBisCO catalyzes two reactions: the carboxylation of D-ribulose 1,5-bisphosphate, the primary event in carbon dioxide fixation, as well as the oxidative fragmentation of the pentose substrate. Both reactions occur simultaneously and in competition at the same active site. Although the small subunit is not catalytic it is essential for maximal activity. This chain is Ribulose bisphosphate carboxylase small subunit, chloroplastic, found in Zantedeschia aethiopica (White calla lily).